A 619-amino-acid polypeptide reads, in one-letter code: ESX-2 secretion system protein EccA2 (619 aa).

373-380 (GPPGTGKT) contributes to the ATP binding site.

Belongs to the CbxX/CfxQ family. Part of the ESX-2 / type VII secretion system (T7SS), which is composed of cytosolic and membrane components.

The protein resides in the cytoplasm. Functionally, part of an ESX-2 / type VII specialized secretion system (T7SS), which exports several proteins. May have ATPase activity and might provide energy for the export of ESX-2 substrates. The polypeptide is ESX-2 secretion system protein EccA2 (Mycobacterium bovis (strain ATCC BAA-935 / AF2122/97)).